Reading from the N-terminus, the 320-residue chain is MRLVFAGTPEFARVALDALLAAGHDIPLVLTQPDRPAGRGLKLTPSPVKQAALAAGIEVAQPRSLRLDGRYPDDAAQAQAQLRQAAPEVMVVAAYGLILPAWTLALPPRGCLNIHASLLPRWRGAAPIQRAIEAGDTQTGVTIMQMDEGLDTGDMLLEHRVPIGAADTAAQLHDALAAAGGQAIVQALAALQAGNLPARPQPADGVTYAAKLDKAQAALDCAQPAALLARRVRAFNPVPGATLRLPGLDEPVKVWRAQALDASAAQAPGSVLRAGPEGIDIATGSGVLRLLELQKAGGKRQPVDVFVRGWQPPAHPLKSE.

(6S)-5,6,7,8-tetrahydrofolate is bound at residue Ser-117 to Pro-120.

Belongs to the Fmt family.

It carries out the reaction L-methionyl-tRNA(fMet) + (6R)-10-formyltetrahydrofolate = N-formyl-L-methionyl-tRNA(fMet) + (6S)-5,6,7,8-tetrahydrofolate + H(+). Its function is as follows. Attaches a formyl group to the free amino group of methionyl-tRNA(fMet). The formyl group appears to play a dual role in the initiator identity of N-formylmethionyl-tRNA by promoting its recognition by IF2 and preventing the misappropriation of this tRNA by the elongation apparatus. This chain is Methionyl-tRNA formyltransferase, found in Bordetella petrii (strain ATCC BAA-461 / DSM 12804 / CCUG 43448).